Reading from the N-terminus, the 314-residue chain is Small ribosomal subunit biogenesis GTPase RsgA (314 aa).

Residues 1–21 (MKRAPTKQPAKPAARGGERAQ) form a disordered region. The CP-type G domain occupies 85–246 (SDQFKSKLFA…LIDSPGFQEF (162 aa)). Residues 134–137 (NKID) and 188–196 (GQSGMGKST) contribute to the GTP site. Cysteine 270, cysteine 275, histidine 277, and cysteine 283 together coordinate Zn(2+).

It belongs to the TRAFAC class YlqF/YawG GTPase family. RsgA subfamily. As to quaternary structure, monomer. Associates with 30S ribosomal subunit, binds 16S rRNA. The cofactor is Zn(2+).

Its subcellular location is the cytoplasm. One of several proteins that assist in the late maturation steps of the functional core of the 30S ribosomal subunit. Helps release RbfA from mature subunits. May play a role in the assembly of ribosomal proteins into the subunit. Circularly permuted GTPase that catalyzes slow GTP hydrolysis, GTPase activity is stimulated by the 30S ribosomal subunit. The polypeptide is Small ribosomal subunit biogenesis GTPase RsgA (Burkholderia pseudomallei (strain 1710b)).